Here is a 405-residue protein sequence, read N- to C-terminus: Threonine synthase (405 aa).

The residue at position 104 (Lys104) is an N6-(pyridoxal phosphate)lysine. Residues Asn130, 231–235 (GNAGN), and Thr369 each bind pyridoxal 5'-phosphate.

It belongs to the threonine synthase family. In terms of assembly, homotrimer. Pyridoxal 5'-phosphate is required as a cofactor.

The enzyme catalyses O-phospho-L-homoserine + H2O = L-threonine + phosphate. The protein operates within amino-acid biosynthesis; L-threonine biosynthesis; L-threonine from L-aspartate: step 5/5. In terms of biological role, catalyzes the gamma-elimination of phosphate from L-phosphohomoserine and the beta-addition of water to produce L-threonine. Does not catalyze the conversion of O-acetyl-L-homoserine into threonine. This chain is Threonine synthase (thrC), found in Methanosarcina acetivorans (strain ATCC 35395 / DSM 2834 / JCM 12185 / C2A).